We begin with the raw amino-acid sequence, 78 residues long: Probable [Fe-S]-dependent transcriptional repressor (78 aa).

Residues C56, C61, C64, and C70 each coordinate iron-sulfur cluster.

The protein belongs to the FeoC family.

May function as a transcriptional regulator that controls feoABC expression. This is Probable [Fe-S]-dependent transcriptional repressor from Salmonella heidelberg (strain SL476).